The chain runs to 655 residues: Very long-chain specific acyl-CoA dehydrogenase, mitochondrial (655 aa).

The N-terminal 40 residues, 1–40 (MQAARMAASLGRQLLRLGGGSSRLTALLGQPRPGPARRPY), are a transit peptide targeting the mitochondrion. Positions 23–42 (RLTALLGQPRPGPARRPYAG) are disordered. The interval 41-482 (AGGAAQLALD…ALQGCMDKGK (442 aa)) is catalytic. Position 51 is an N6-acetyllysine (lysine 51). Lysine 71 bears the N6-acetyllysine; alternate mark. Lysine 71 carries the N6-succinyllysine; alternate modification. Lysine 195 is modified (N6-succinyllysine). Residue 214–223 (FCLTEPSSGS) coordinates FAD. At cysteine 237 the chain carries S-nitrosocysteine. Lysine 239 bears the N6-acetyllysine; alternate mark. Residue lysine 239 is modified to N6-succinyllysine; alternate. 249 to 251 (WIS) is a binding site for FAD. N6-acetyllysine; alternate occurs at positions 276 and 278. Lysine 276 and lysine 278 each carry N6-succinyllysine; alternate. Lysine 298 bears the N6-acetyllysine mark. Lysine 331 carries the N6-acetyllysine; alternate modification. Lysine 331 carries the N6-succinyllysine; alternate modification. Lysine 372 bears the N6-succinyllysine mark. 461–463 (FEG) contributes to the substrate binding site. Glutamate 462 functions as the Proton acceptor in the catalytic mechanism. 464-466 (TND) lines the FAD pocket. Lysine 482 is modified (N6-acetyllysine; alternate). Residue lysine 482 is modified to N6-succinyllysine; alternate. A membrane-anchoring region spans residues 483–516 (ELSGLGSALKNPFGNAGLLLGEAGKQLRRRAGLG). Serine 517 and serine 522 each carry phosphoserine. Lysine 550 carries the N6-acetyllysine modification. Position 556 is an N6-acetyllysine; alternate (lysine 556). Position 556 is an N6-succinyllysine; alternate (lysine 556). Glutamine 562 serves as a coordination point for FAD. Lysine 639 bears the N6-succinyllysine mark.

This sequence belongs to the acyl-CoA dehydrogenase family. In terms of assembly, homodimer. Homodimerizes after import into the mitochondrion. FAD serves as cofactor. Post-translationally, S-nitrosylation at Cys-237 in liver improves catalytic efficiency. In terms of tissue distribution, predominantly expressed in heart and skeletal muscle (at protein level). Also detected in kidney and liver (at protein level).

It localises to the mitochondrion inner membrane. The catalysed reaction is a very-long-chain 2,3-saturated fatty acyl-CoA + oxidized [electron-transfer flavoprotein] + H(+) = a very-long-chain (2E)-enoyl-CoA + reduced [electron-transfer flavoprotein]. The enzyme catalyses decanoyl-CoA + oxidized [electron-transfer flavoprotein] + H(+) = (2E)-decenoyl-CoA + reduced [electron-transfer flavoprotein]. It catalyses the reaction dodecanoyl-CoA + oxidized [electron-transfer flavoprotein] + H(+) = (2E)-dodecenoyl-CoA + reduced [electron-transfer flavoprotein]. It carries out the reaction tetradecanoyl-CoA + oxidized [electron-transfer flavoprotein] + H(+) = (2E)-tetradecenoyl-CoA + reduced [electron-transfer flavoprotein]. The catalysed reaction is oxidized [electron-transfer flavoprotein] + hexadecanoyl-CoA + H(+) = (2E)-hexadecenoyl-CoA + reduced [electron-transfer flavoprotein]. The enzyme catalyses octadecanoyl-CoA + oxidized [electron-transfer flavoprotein] + H(+) = (2E)-octadecenoyl-CoA + reduced [electron-transfer flavoprotein]. It catalyses the reaction eicosanoyl-CoA + oxidized [electron-transfer flavoprotein] + H(+) = (2E)-eicosenoyl-CoA + reduced [electron-transfer flavoprotein]. It carries out the reaction docosanoyl-CoA + oxidized [electron-transfer flavoprotein] + H(+) = (2E)-docosenoyl-CoA + reduced [electron-transfer flavoprotein]. The catalysed reaction is tetracosanoyl-CoA + oxidized [electron-transfer flavoprotein] + H(+) = (2E)-tetracosenoyl-CoA + reduced [electron-transfer flavoprotein]. The enzyme catalyses (9Z)-hexadecenoyl-CoA + oxidized [electron-transfer flavoprotein] + H(+) = (2E,9Z)-hexadecadienoyl-CoA + reduced [electron-transfer flavoprotein]. It catalyses the reaction oxidized [electron-transfer flavoprotein] + (9Z)-octadecenoyl-CoA + H(+) = (2E,9Z)-octadecadienoyl-CoA + reduced [electron-transfer flavoprotein]. It functions in the pathway lipid metabolism; mitochondrial fatty acid beta-oxidation. Its function is as follows. Very long-chain specific acyl-CoA dehydrogenase is one of the acyl-CoA dehydrogenases that catalyze the first step of mitochondrial fatty acid beta-oxidation, an aerobic process breaking down fatty acids into acetyl-CoA and allowing the production of energy from fats. The first step of fatty acid beta-oxidation consists in the removal of one hydrogen from C-2 and C-3 of the straight-chain fatty acyl-CoA thioester, resulting in the formation of trans-2-enoyl-CoA. Among the different mitochondrial acyl-CoA dehydrogenases, very long-chain specific acyl-CoA dehydrogenase acts specifically on acyl-CoAs with saturated 12 to 24 carbons long primary chains. This is Very long-chain specific acyl-CoA dehydrogenase, mitochondrial from Homo sapiens (Human).